The following is a 239-amino-acid chain: UPF0502 protein Bcen_5249 (239 aa).

A disordered region spans residues 196 to 239; that stretch reads IRGAKGRTEAPRGRSGATQCAGSTDGERTRHRRRRTGRRVLIAS. The segment covering 224–233 has biased composition (basic residues); the sequence is TRHRRRRTGR.

It belongs to the UPF0502 family.

The sequence is that of UPF0502 protein Bcen_5249 from Burkholderia orbicola (strain AU 1054).